Reading from the N-terminus, the 117-residue chain is Elafin (117 aa).

The first 22 residues, 1-22 (MRASSFLIVVVFLIAGTLVLEA), serve as a signal peptide directing secretion. Positions 23 to 60 (AVTGVPVKGQDTVKGRVPFNGQDPVKGQVSVKGQDKVK) are excised as a propeptide. SVP-1 clotting repeat units lie at residues 29-54 (VKGQ…VSVK) and 55-72 (GQDK…VSTK). Residues 29–72 (VKGQDTVKGRVPFNGQDPVKGQVSVKGQDKVKAQEPVKGPVSTK) form a 2 X tandem repeats of SVP-1 like motif region. In terms of domain architecture, WAP spans 69-117 (VSTKPGSCPIILIRCAMLNPPNRCLKDTDCPGIKKCCEGSCGMACFVPQ). Disulfide bonds link cysteine 76/cysteine 105, cysteine 83/cysteine 109, cysteine 92/cysteine 104, and cysteine 98/cysteine 113.

It localises to the secreted. In terms of biological role, neutrophil and pancreatic elastase-specific inhibitor of skin. It may prevent elastase-mediated tissue proteolysis. Has been shown to inhibit the alpha-4-beta-2/CHRNA2-CHRNB2 nicotinic acetylcholine receptor and to produce a weak inhibition on Kv11.1/KCNH2/ERG1 and on the transient receptor potential cation channel subfamily V member 1 (TRPV1). The protein is Elafin (PI3) of Homo sapiens (Human).